Here is a 350-residue protein sequence, read N- to C-terminus: Homeobox-leucine zipper protein HOX5 (350 aa).

The segment at residues 83–142 (APEKKRRLTAEQVQMLERSFEEENKLEPERKTELARRLGMAPRQVAVWFQNRRARWKTKQ) is a DNA-binding region (homeobox). Residues 141 to 185 (KQLEHDFDRLKAAYDALAADHHALLSDNDRLRAQVISLTEKLQDK) form a leucine-zipper region. Residues 180-254 (EKLQDKETSP…TNDDGDGGGA (75 aa)) are disordered. Low complexity predominate over residues 188–198 (SPSSATITTAA).

This sequence belongs to the HD-ZIP homeobox family. Class I subfamily. Homodimer. May form a heterodimer with HOX4. In terms of tissue distribution, expressed in seedlings, roots, leaves, nodes, internodes, flowers and embryo.

The protein localises to the nucleus. Its function is as follows. Probable transcription activator that binds to the DNA sequence 5'-CAAT[AT]ATTG-3'. The protein is Homeobox-leucine zipper protein HOX5 (HOX5) of Oryza sativa subsp. indica (Rice).